We begin with the raw amino-acid sequence, 242 residues long: ATP synthase subunit a (242 aa).

Helical transmembrane passes span 29–49 (SSIY…LAFY), 84–104 (FIPL…LGMT), 114–134 (IIVT…VGFV), 140–160 (FLTL…MIVI), 181–201 (MAGH…MIYL), and 203–223 (FLPI…AILQ).

It belongs to the ATPase A chain family. In terms of assembly, F-type ATPases have 2 components, CF(1) - the catalytic core - and CF(0) - the membrane proton channel. CF(1) has five subunits: alpha(3), beta(3), gamma(1), delta(1), epsilon(1). CF(0) has three main subunits: a(1), b(2) and c(9-12). The alpha and beta chains form an alternating ring which encloses part of the gamma chain. CF(1) is attached to CF(0) by a central stalk formed by the gamma and epsilon chains, while a peripheral stalk is formed by the delta and b chains.

Its subcellular location is the cell inner membrane. Its function is as follows. Key component of the proton channel; it plays a direct role in the translocation of protons across the membrane. This Rickettsia rickettsii (strain Sheila Smith) protein is ATP synthase subunit a.